The following is a 309-amino-acid chain: 2-dehydropantoate 2-reductase (309 aa).

Residues 7–12, arginine 31, and lysine 74 each bind NADP(+); that span reads GAGSIG. Residues 8–10, arginine 31, lysine 74, and cysteine 84 contribute to the CoA site; that span reads AGS. Residues asparagine 100 and alanine 124 each coordinate NADP(+). Lysine 180 serves as the catalytic Proton donor. Substrate contacts are provided by residues lysine 180, asparagine 184, asparagine 188, asparagine 198, and 247–250; that span reads NYNS. Position 257 (arginine 257) interacts with CoA. Residue glutamate 262 participates in NADP(+) binding.

It belongs to the ketopantoate reductase family. In terms of assembly, homodimer.

It is found in the cytoplasm. The catalysed reaction is (R)-pantoate + NAD(+) = 2-dehydropantoate + NADH + H(+). It carries out the reaction (R)-pantoate + NADP(+) = 2-dehydropantoate + NADPH + H(+). It participates in cofactor biosynthesis; coenzyme A biosynthesis. Its activity is regulated as follows. Regulated by feedback inhibition by coenzyme A (CoA). CoA acts by competing with NAD(P)H. A disulfide bond is formed between CoA and Cys-84, which indicates an irreversible inhibition upon binding of CoA. Catalyzes the NAD(P)H-dependent reduction of ketopantoate into pantoic acid. Prefers NADH rather than NADPH as the electron donor. This chain is 2-dehydropantoate 2-reductase, found in Thermococcus kodakarensis (strain ATCC BAA-918 / JCM 12380 / KOD1) (Pyrococcus kodakaraensis (strain KOD1)).